Reading from the N-terminus, the 537-residue chain is ESX-2 secretion system protein EccE2 (537 aa).

The helical transmembrane segment at 31–51 threads the bilayer; sequence ALGGQLGAVMAVVVGVALVFV.

It belongs to the EccE family. In terms of assembly, could be part of the ESX-2 / type VII secretion system (T7SS), which is composed of cytosolic and membrane components.

The protein localises to the cell membrane. This Mycobacterium tuberculosis (strain CDC 1551 / Oshkosh) protein is ESX-2 secretion system protein EccE2 (eccE2).